The primary structure comprises 2012 residues: Cell adhesion molecule DSCAM (2012 aa).

The signal sequence occupies residues 1 to 17 (MWILALSLFQSFANVFS). Over 18–1595 (EDLHSSLYFV…GLTTNEGLKM (1578 aa)) the chain is Extracellular. 2 N-linked (GlcNAc...) asparagine glycosylation sites follow: asparagine 28 and asparagine 78. 9 Ig-like C2-type domains span residues 39 to 129 (TTGT…YTVR), 125 to 216 (PYTV…ARLF), 225 to 305 (PSIL…AKVI), 313 to 401 (PLKA…VQVV), 407 to 500 (PKII…ARIN), 504 to 592 (PASI…VHVT), 596 to 685 (PPFI…SQLI), 690 to 783 (PKFV…MYLT), and 787 to 883 (PAMI…LTVQ). Intrachain disulfides connect cysteine 46–cysteine 102, cysteine 145–cysteine 197, cysteine 246–cysteine 293, cysteine 335–cysteine 385, and cysteine 428–cysteine 484. N-linked (GlcNAc...) asparagine glycosylation is found at asparagine 470, asparagine 487, asparagine 512, asparagine 556, asparagine 658, asparagine 666, asparagine 710, asparagine 748, and asparagine 795. 2 cysteine pairs are disulfide-bonded: cysteine 525–cysteine 575 and cysteine 617–cysteine 669. Cysteine 711 and cysteine 766 form a disulfide bridge. Cysteines 809 and 865 form a disulfide. Fibronectin type-III domains follow at residues 885-982 (PPDP…ADEA), 987-1086 (PPQE…TLED), 1091-1187 (PPEN…TKED), and 1191-1285 (PPAG…AKAP). N-linked (GlcNAc...) asparagine glycosylation occurs at asparagine 924. 5 N-linked (GlcNAc...) asparagine glycosylation sites follow: asparagine 1142, asparagine 1160, asparagine 1250, asparagine 1271, and asparagine 1341. An Ig-like C2-type 10 domain is found at 1285 to 1377 (PARILTFSGT…DEIILNLQVQ (93 aa)). Cysteine 1307 and cysteine 1359 form a disulfide bridge. Fibronectin type-III domains lie at 1379-1473 (PPDQ…TLGK) and 1474-1575 (EPQF…TIPP). A glycan (N-linked (GlcNAc...) asparagine) is linked at asparagine 1488. A helical membrane pass occupies residues 1596–1616 (LVTISCILVGVLLLFVLLLVV). Over 1617–2012 (RRRRREQRLK…NPYAKSYTLV (396 aa)) the chain is Cytoplasmic. Residues 1617-2012 (RRRRREQRLK…NPYAKSYTLV (396 aa)) form a required for netrin-mediated axon repulsion of neuronal growth cones region. Disordered regions lie at residues 1718 to 1810 (LVDV…ASST), 1855 to 1883 (TDSLTSSTPSESGICRFTASPPKPQDGGR), and 1971 to 2012 (LPQR…YTLV). Residues 1799–1809 (SSMVSTESASS) are compositionally biased toward low complexity. The segment covering 1855–1865 (TDSLTSSTPSE) has biased composition (polar residues).

In terms of assembly, homodimer; mediates homophilic interactions to promote cell adhesion. Interacts with DCC; the interaction is abolished in response to NTN1. Interacts (via extracellular domain) with NTN1. Interacts (via extracellular domain) with UNC5C (via Ig-like C2-type domain). Interacts with PTK2. Interacts with FYN. Phosphorylated at tyrosine residues. Phosphorylation is enhanced by NTN1. Primarily expressed in brain.

It is found in the secreted. The protein localises to the cell membrane. The protein resides in the cell projection. Its subcellular location is the axon. It localises to the dendrite. It is found in the growth cone. The protein localises to the synapse. In terms of biological role, cell adhesion molecule that plays a role in neuronal self-avoidance. Promotes repulsion between specific neuronal processes of either the same cell or the same subtype of cells. Mediates within retinal amacrine and ganglion cell subtypes both isoneuronal self-avoidance for creating an orderly dendritic arborization and heteroneuronal self-avoidance to maintain the mosaic spacing between amacrine and ganglion cell bodies. Receptor for netrin required for axon guidance independently of and in collaboration with the receptor DCC. Might also collaborate with UNC5C in NTN1-mediated axon repulsion independently of DCC. In spinal cord development plays a role in guiding commissural axons projection and pathfinding across the ventral midline to reach the floor plate upon ligand binding. Mediates intracellular signaling by stimulating the activation of MAPK8 and MAP kinase p38. Adhesion molecule that promotes lamina-specific synaptic connections in the retina: expressed in specific subsets of interneurons and retinal ganglion cells (RGCs) and promotes synaptic connectivity via homophilic interactions. In Homo sapiens (Human), this protein is Cell adhesion molecule DSCAM (DSCAM).